Consider the following 460-residue polypeptide: Argininosuccinate lyase (460 aa).

The protein belongs to the lyase 1 family. Argininosuccinate lyase subfamily.

It is found in the cytoplasm. The catalysed reaction is 2-(N(omega)-L-arginino)succinate = fumarate + L-arginine. It functions in the pathway amino-acid biosynthesis; L-arginine biosynthesis; L-arginine from L-ornithine and carbamoyl phosphate: step 3/3. The polypeptide is Argininosuccinate lyase (Campylobacter hominis (strain ATCC BAA-381 / DSM 21671 / CCUG 45161 / LMG 19568 / NCTC 13146 / CH001A)).